The sequence spans 272 residues: Undecaprenyl-diphosphatase (272 aa).

Transmembrane regions (helical) follow at residues 4 to 24 (IHSLLVAAILGVVEGLTEFLP), 45 to 65 (AETFEVVIQLGSILAVVVMFW), 89 to 109 (LTLGHIVLGMIPAVVLGLVFH), 115 to 135 (LFNPVNVMYALVVGGLLLIAA), 152 to 174 (TYRQAFMIGCFQCLALWPGFSRS), 189 to 209 (YAASEFSFLLAVPMMMGATAL), 225 to 245 (MFAVGFVTAFIVALIAIKTFL), and 251 to 271 (ISFIPFAIYRFIVAAAVYVVF).

The protein belongs to the UppP family.

Its subcellular location is the cell inner membrane. It carries out the reaction di-trans,octa-cis-undecaprenyl diphosphate + H2O = di-trans,octa-cis-undecaprenyl phosphate + phosphate + H(+). In terms of biological role, catalyzes the dephosphorylation of undecaprenyl diphosphate (UPP). Confers resistance to bacitracin. In Citrobacter koseri (strain ATCC BAA-895 / CDC 4225-83 / SGSC4696), this protein is Undecaprenyl-diphosphatase.